The sequence spans 841 residues: Taste receptor type 1 member 1 (841 aa).

Positions 1–20 (MLLCTARLVGLQLLISCCWA) are cleaved as a signal peptide. The Extracellular portion of the chain corresponds to 21–567 (FACHSTESSP…VFLALREHTS (547 aa)). 6 N-linked (GlcNAc...) asparagine glycosylation sites follow: Asn-87, Asn-88, Asn-95, Asn-291, Asn-479, and Asn-529. Residues 568 to 588 (WVLLAANTLLLLLLLGTAGLF) form a helical membrane-spanning segment. The Cytoplasmic segment spans residues 589-603 (AWHLDTPVVRSAGGR). Residues 604–624 (LCFLMLGSLAAGSGSLYGFFG) form a helical membrane-spanning segment. The Extracellular portion of the chain corresponds to 625–639 (EPTRPACLLRQALFA). A helical membrane pass occupies residues 640-660 (LGFTIFLSCLTVRSFQLIIIF). Topologically, residues 661 to 680 (KFSTKVPTFYHAWVQNHGAG) are cytoplasmic. Residues 681–701 (LFVMISSAAQLLICLTWLVVW) traverse the membrane as a helical segment. The Extracellular segment spans residues 702-725 (TPLPAREYQRFPHLVMLECTETNS). Residues 726–746 (LGFILAFLYNGLLSISAFACS) traverse the membrane as a helical segment. Over 747–761 (YLGKDLPENYNEAKC) the chain is Cytoplasmic. The chain crosses the membrane as a helical span at residues 762–782 (VTFSLLFNFVSWIAFFTTASV). The Extracellular segment spans residues 783–795 (YDGKYLPAANMMA). The helical transmembrane segment at 796–816 (GLSSLSSGFGGYFLPKCYVIL) threads the bilayer. At 817-841 (CRPDLNSTEHFQASIQDYTRRCGST) the chain is on the cytoplasmic side.

The protein belongs to the G-protein coupled receptor 3 family. TAS1R subfamily. Forms heterodimers with TAS1R3.

The protein localises to the cell membrane. Functionally, putative taste receptor. TAS1R1/TAS1R3 responds to the umami taste stimulus (the taste of monosodium glutamate). Sequence differences within and between species can significantly influence the selectivity and specificity of taste responses. The protein is Taste receptor type 1 member 1 (TAS1R1) of Homo sapiens (Human).